The chain runs to 743 residues: 1,4-alpha-glucan branching enzyme GlgB 2 (743 aa).

Residues M1 to S23 form a disordered region. D422 (nucleophile) is an active-site residue. The Proton donor role is filled by E475.

Belongs to the glycosyl hydrolase 13 family. GlgB subfamily. Monomer.

It catalyses the reaction Transfers a segment of a (1-&gt;4)-alpha-D-glucan chain to a primary hydroxy group in a similar glucan chain.. It functions in the pathway glycan biosynthesis; glycogen biosynthesis. Functionally, catalyzes the formation of the alpha-1,6-glucosidic linkages in glycogen by scission of a 1,4-alpha-linked oligosaccharide from growing alpha-1,4-glucan chains and the subsequent attachment of the oligosaccharide to the alpha-1,6 position. The sequence is that of 1,4-alpha-glucan branching enzyme GlgB 2 from Xanthomonas euvesicatoria pv. vesicatoria (strain 85-10) (Xanthomonas campestris pv. vesicatoria).